The chain runs to 264 residues: 3'-5' ssDNA/RNA exonuclease TatD (264 aa).

3 residues coordinate a divalent metal cation: E92, H128, and H153.

The protein belongs to the metallo-dependent hydrolases superfamily. TatD-type hydrolase family. TatD subfamily. Monomer. Mg(2+) is required as a cofactor.

Its subcellular location is the cytoplasm. Functionally, 3'-5' exonuclease that prefers single-stranded DNA and RNA. May play a role in the H(2)O(2)-induced DNA damage repair. The protein is 3'-5' ssDNA/RNA exonuclease TatD of Dickeya dadantii (strain 3937) (Erwinia chrysanthemi (strain 3937)).